We begin with the raw amino-acid sequence, 82 residues long: Large ribosomal subunit protein bL31B (82 aa).

The protein belongs to the bacterial ribosomal protein bL31 family. Type B subfamily. Part of the 50S ribosomal subunit.

In Pectobacterium carotovorum subsp. carotovorum (strain PC1), this protein is Large ribosomal subunit protein bL31B.